A 142-amino-acid chain; its full sequence is Large ribosomal subunit protein bL17 (142 aa).

The protein belongs to the bacterial ribosomal protein bL17 family. In terms of assembly, part of the 50S ribosomal subunit. Contacts protein L32.

This Methylocella silvestris (strain DSM 15510 / CIP 108128 / LMG 27833 / NCIMB 13906 / BL2) protein is Large ribosomal subunit protein bL17.